A 540-amino-acid polypeptide reads, in one-letter code: Isocitrate lyase (540 aa).

A substrate-binding site is contributed by Ser103 to Trp105. Asp187 is a binding site for Mg(2+). Cys225 functions as the Proton acceptor in the catalytic mechanism. Substrate contacts are provided by residues Gly226–His227, Asn385–Ser389, and Thr458.

This sequence belongs to the isocitrate lyase/PEP mutase superfamily. Isocitrate lyase family. As to quaternary structure, homotetramer. It depends on Mg(2+) as a cofactor.

The catalysed reaction is D-threo-isocitrate = glyoxylate + succinate. Its pathway is carbohydrate metabolism; glyoxylate cycle; (S)-malate from isocitrate: step 1/2. It participates in one-carbon metabolism; formaldehyde assimilation via serine pathway. In the presence of magnesium, inhibited by oxalate, potassium cyanide, manganese, silver, cadmium and to a lesser extent by succinate, glycolate, iodoacetamide, DL-penicillamine, aluminum, sodium, potassium, lithium and strontium. In terms of biological role, involved in the metabolic adaptation in response to environmental changes. Catalyzes the reversible formation of succinate and glyoxylate from isocitrate, a key step of the glyoxylate cycle, which operates as an anaplerotic route for replenishing the tricarboxylic acid cycle during growth on fatty acid substrates. May be involved in the assimilation of one-carbon compounds via the isocitrate lyase-positive serine pathway. The chain is Isocitrate lyase from Hyphomicrobium methylovorum.